The primary structure comprises 220 residues: MSIPLEQPENVVVLRQTMYLLSLMTILRDQQTGHSEFVRTANLIINMLMQEALSALPYKKCLIKTSSGGTYTGVQPARDICGVSILRAGESMEYGLAAACNYSVPVGKLLVQRDETTFEAKLMFCKLPKDAQDRLVLLLDPLLATGNSVILAIQTLINKGIPEENIVFVNLIACNEGITNVFAKFPKLRMVTASIDPELNANKYVVPGCGDFGDRYFGTC.

Position 77–80 (77–80 (ARDI)) interacts with GTP. 5-phospho-alpha-D-ribose 1-diphosphate contacts are provided by R87 and R113. R134 is a binding site for GTP. 5-phospho-alpha-D-ribose 1-diphosphate-binding positions include D140 and 140-148 (DPLLATGNS). D-ribose 5-phosphate is bound at residue Y204. Uracil is bound by residues V205 and 210–212 (GDF). D211 provides a ligand contact to 5-phospho-alpha-D-ribose 1-diphosphate.

Belongs to the UPRTase family. It depends on Mg(2+) as a cofactor.

The catalysed reaction is UMP + diphosphate = 5-phospho-alpha-D-ribose 1-diphosphate + uracil. Its pathway is pyrimidine metabolism; UMP biosynthesis via salvage pathway; UMP from uracil: step 1/1. With respect to regulation, allosterically activated by GTP. Its function is as follows. Catalyzes the conversion of uracil and 5-phospho-alpha-D-ribose 1-diphosphate (PRPP) to UMP and diphosphate. This chain is Uracil phosphoribosyltransferase 2, found in Schizosaccharomyces pombe (strain 972 / ATCC 24843) (Fission yeast).